The sequence spans 380 residues: tRNA-specific 2-thiouridylase MnmA (380 aa).

Residues 12–19 and methionine 38 contribute to the ATP site; that span reads GLSGGVDS. The segment at 108-110 is interaction with target base in tRNA; that stretch reads NPD. The active-site Nucleophile is the cysteine 113. Cysteine 113 and cysteine 210 are disulfide-bonded. Glycine 138 provides a ligand contact to ATP. The interaction with tRNA stretch occupies residues 160–162; sequence KDQ. Cysteine 210 (cysteine persulfide intermediate) is an active-site residue.

This sequence belongs to the MnmA/TRMU family.

The protein resides in the cytoplasm. It catalyses the reaction S-sulfanyl-L-cysteinyl-[protein] + uridine(34) in tRNA + AH2 + ATP = 2-thiouridine(34) in tRNA + L-cysteinyl-[protein] + A + AMP + diphosphate + H(+). Functionally, catalyzes the 2-thiolation of uridine at the wobble position (U34) of tRNA, leading to the formation of s(2)U34. This is tRNA-specific 2-thiouridylase MnmA from Ureaplasma urealyticum serovar 10 (strain ATCC 33699 / Western).